We begin with the raw amino-acid sequence, 217 residues long: Probable GTP-binding protein EngB (217 aa).

Residues Glu27–Glu201 enclose the EngB-type G domain. Residues Gly35 to Ser42, Gly62 to Leu66, Asp80 to Gly83, Thr147 to Asp150, and Phe180 to Ser182 each bind GTP. Mg(2+)-binding residues include Ser42 and Thr64.

It belongs to the TRAFAC class TrmE-Era-EngA-EngB-Septin-like GTPase superfamily. EngB GTPase family. The cofactor is Mg(2+).

Functionally, necessary for normal cell division and for the maintenance of normal septation. This is Probable GTP-binding protein EngB from Yersinia enterocolitica serotype O:8 / biotype 1B (strain NCTC 13174 / 8081).